The sequence spans 455 residues: Xylan O-acetyltransferase 3 (455 aa).

Low complexity predominate over residues methionine 1–threonine 15. The disordered stretch occupies residues methionine 1–arginine 32. At methionine 1–proline 42 the chain is on the cytoplasmic side. Positions serine 16–alanine 28 are enriched in pro residues. Residues valine 43–glycine 59 traverse the membrane as a helical; Signal-anchor for type II membrane protein segment. The Lumenal portion of the chain corresponds to glutamate 60 to glutamine 455. N-linked (GlcNAc...) asparagine glycosylation is found at asparagine 82, asparagine 107, and asparagine 146. 4 disulfide bridges follow: cysteine 96/cysteine 147, cysteine 118/cysteine 183, cysteine 127/cysteine 423, and cysteine 339/cysteine 419. The GDS motif signature appears at glycine 170–serine 172. Serine 172 acts as the Nucleophile in catalysis. N-linked (GlcNAc...) asparagine glycans are attached at residues asparagine 278 and asparagine 348. Aspartate 418 serves as the catalytic Proton donor. Positions aspartate 418–histidine 421 match the DXXH motif motif. Residue histidine 421 is the Proton acceptor of the active site.

Belongs to the PC-esterase family. TBL subfamily. Highly expressed in leaves. Expressed in roots, stems and inflorescences.

The protein resides in the golgi apparatus membrane. Functionally, xylan acetyltransferase required for 2-O- and 3-O-monoacetylation of xylosyl residues in xylan. Catalyzes the 2-O-acetylation of xylan, followed by nonenzymatic acetyl migration to the O-3 position, resulting in products that are monoacetylated at both O-2 and O-3 positions. This is Xylan O-acetyltransferase 3 from Oryza sativa subsp. japonica (Rice).